A 113-amino-acid chain; its full sequence is U11-theraphotoxin-Hhn1a (113 aa).

The signal sequence occupies residues 1–21 (MNTVRVTFLLVFVLAVSLGQA). The propeptide occupies 22–74 (DKDENRMEVQEKTEQGKSYLDFAENLLLQKLEELEAKLLEEDSEESRNSRQKR). The segment at 61–83 (EEDSEESRNSRQKRCIGEGVPCD) is disordered. Cystine bridges form between cysteine 75–cysteine 90, cysteine 82–cysteine 95, and cysteine 89–cysteine 110.

Belongs to the neurotoxin 14 (magi-1) family. 01 (HNTX-16) subfamily. Expressed by the venom gland.

It localises to the secreted. In terms of biological role, probable ion channel inhibitor. The protein is U11-theraphotoxin-Hhn1a of Cyriopagopus hainanus (Chinese bird spider).